We begin with the raw amino-acid sequence, 204 residues long: CASP-like protein 3A1 (204 aa).

Residues 1–39 (MGSIGNGRNGSEVGIQIPAMGNKEVLERPAIPRWPRLGV) lie on the Cytoplasmic side of the membrane. The chain crosses the membrane as a helical span at residues 40–60 (VMVATRAVALVMAVLSMALMI). Over 61–88 (SAKQRGSLKIFGIEIPLYANWSFSDSLE) the chain is Extracellular. N-linked (GlcNAc...) asparagine glycosylation is present at Asn-80. A helical transmembrane segment spans residues 89-109 (YLVGMSAVSAAYCLAQLLLTA). Over 110–124 (HKAVKNAPVVQSRNY) the chain is Cytoplasmic. Residues 125–145 (AWLLFTGDQIFAYAMMSAGSA) form a helical membrane-spanning segment. Residues 146–179 (AAAVANLNRTGIRHTALPNFCKPLPRFCDLSAAS) are Extracellular-facing. Asn-153 carries N-linked (GlcNAc...) asparagine glycosylation. A helical transmembrane segment spans residues 180-200 (IACAFLSCIFLAASAVIDVIW). The Cytoplasmic segment spans residues 201–204 (LSNM).

The protein belongs to the Casparian strip membrane proteins (CASP) family. In terms of assembly, homodimer and heterodimers.

The protein localises to the cell membrane. In Oryza sativa subsp. indica (Rice), this protein is CASP-like protein 3A1.